Reading from the N-terminus, the 357-residue chain is Dual-specificity RNA methyltransferase RlmN (357 aa).

Glu-89 functions as the Proton acceptor in the catalytic mechanism. The Radical SAM core domain maps to 109 to 340; it reads EREKYTVCVS…CTIRESKALD (232 aa). Cys-116 and Cys-345 are joined by a disulfide. [4Fe-4S] cluster contacts are provided by Cys-123, Cys-127, and Cys-130. S-adenosyl-L-methionine contacts are provided by residues 173 to 174, Ser-203, 226 to 228, and Asn-302; these read GE and SLH. Cys-345 (S-methylcysteine intermediate) is an active-site residue.

Belongs to the radical SAM superfamily. RlmN family. It depends on [4Fe-4S] cluster as a cofactor.

The protein localises to the cytoplasm. It carries out the reaction adenosine(2503) in 23S rRNA + 2 reduced [2Fe-2S]-[ferredoxin] + 2 S-adenosyl-L-methionine = 2-methyladenosine(2503) in 23S rRNA + 5'-deoxyadenosine + L-methionine + 2 oxidized [2Fe-2S]-[ferredoxin] + S-adenosyl-L-homocysteine. The catalysed reaction is adenosine(37) in tRNA + 2 reduced [2Fe-2S]-[ferredoxin] + 2 S-adenosyl-L-methionine = 2-methyladenosine(37) in tRNA + 5'-deoxyadenosine + L-methionine + 2 oxidized [2Fe-2S]-[ferredoxin] + S-adenosyl-L-homocysteine. In terms of biological role, specifically methylates position 2 of adenine 2503 in 23S rRNA and position 2 of adenine 37 in tRNAs. m2A2503 modification seems to play a crucial role in the proofreading step occurring at the peptidyl transferase center and thus would serve to optimize ribosomal fidelity. This is Dual-specificity RNA methyltransferase RlmN from Helicobacter pylori (strain ATCC 700392 / 26695) (Campylobacter pylori).